The primary structure comprises 1224 residues: A disintegrin and metalloproteinase with thrombospondin motifs 16 (1224 aa).

Positions 1 to 24 are cleaved as a signal peptide; the sequence is MKPRARGWRGLAALWMLLAQVAEQ. Positions 25 to 279 are excised as a propeptide; sequence APACAMGPAA…EYKSCLRHKR (255 aa). The segment at 31-53 is disordered; the sequence is GPAAAAPGSPSVPRPPPPAERPG. The span at 40-50 shows a compositional bias: pro residues; that stretch reads PSVPRPPPPAE. Residue asparagine 156 is glycosylated (N-linked (GlcNAc...) asparagine). A Cysteine switch motif is present at residues 247–254; it reads HFCGRRKK. Cysteine 249 contacts Zn(2+). The 206-residue stretch at 290–495 folds into the Peptidase M12B domain; the sequence is LNVETLVVVD…AQAICLADQP (206 aa). Asparagine 310 is a glycosylation site (N-linked (GlcNAc...) asparagine). Disulfide bonds link cysteine 366-cysteine 417, cysteine 392-cysteine 399, cysteine 411-cysteine 490, cysteine 450-cysteine 474, cysteine 518-cysteine 543, cysteine 529-cysteine 550, cysteine 538-cysteine 569, cysteine 563-cysteine 574, cysteine 598-cysteine 635, cysteine 602-cysteine 640, and cysteine 613-cysteine 625. Histidine 433 lines the Zn(2+) pocket. Glutamate 434 is a catalytic residue. Residues histidine 437 and histidine 443 each coordinate Zn(2+). A Disintegrin domain is found at 496-585; sequence KPVKEYKYPE…KYGDEGPKPT (90 aa). Residues 586–641 enclose the TSP type-1 1 domain; it reads HGHWSDWSSWSPCSRTCGGGVSHRSRLCTNPKPSHGGKFCEGSTRTLKLCNSQKCP. N-linked (GlcNAc...) asparagine glycans are attached at residues asparagine 741, asparagine 780, asparagine 835, asparagine 905, and asparagine 935. Positions 747-873 are spacer; that stretch reads IHRGLYTKHH…KQPPAQPSYT (127 aa). TSP type-1 domains are found at residues 874-922, 927-987, 988-1048, 1051-1115, and 1127-1181; these read WAIV…LVPC, CPPS…QSCP, PAWS…QRCH, KKLQ…LPCP, and RGSW…HFCP. 3 disulfide bridges follow: cysteine 939-cysteine 981, cysteine 943-cysteine 986, and cysteine 954-cysteine 970. The region spanning 1186–1223 is the PLAC domain; it reads KDAFCKDYFHWCYLVPQHGMCSHKFYGKQCCKTCSKSN.

Requires Zn(2+) as cofactor. The precursor is cleaved by a furin endopeptidase. In terms of processing, glycosylated. Can be O-fucosylated by POFUT2 on a serine or a threonine residue found within the consensus sequence C1-X(2)-(S/T)-C2-G of the TSP type-1 repeat domains where C1 and C2 are the first and second cysteine residue of the repeat, respectively. Fucosylated repeats can then be further glycosylated by the addition of a beta-1,3-glucose residue by the glucosyltransferase, B3GALTL. Fucosylation mediates the efficient secretion of ADAMTS family members. Can also be C-glycosylated with one or two mannose molecules on tryptophan residues within the consensus sequence W-X-X-W of the TPRs, and N-glycosylated. These other glycosylations can also facilitate secretion. As to expression, expressed in fetal lung and kidney and in adult prostate and ovary.

Its subcellular location is the secreted. It is found in the extracellular space. The protein localises to the extracellular matrix. The protein is A disintegrin and metalloproteinase with thrombospondin motifs 16 (ADAMTS16) of Homo sapiens (Human).